We begin with the raw amino-acid sequence, 190 residues long: Potassium-transporting ATPase KdpC subunit (190 aa).

A helical membrane pass occupies residues 13 to 33; it reads VGFLLLTLMCGVVYPGIVTIF.

It belongs to the KdpC family. As to quaternary structure, the system is composed of three essential subunits: KdpA, KdpB and KdpC.

The protein localises to the cell membrane. Functionally, part of the high-affinity ATP-driven potassium transport (or Kdp) system, which catalyzes the hydrolysis of ATP coupled with the electrogenic transport of potassium into the cytoplasm. This subunit acts as a catalytic chaperone that increases the ATP-binding affinity of the ATP-hydrolyzing subunit KdpB by the formation of a transient KdpB/KdpC/ATP ternary complex. This chain is Potassium-transporting ATPase KdpC subunit, found in Listeria monocytogenes serotype 4b (strain CLIP80459).